We begin with the raw amino-acid sequence, 255 residues long: Acetylglutamate kinase (255 aa).

Substrate-binding positions include 40-41 (GG), Arg62, and Asn153.

The protein belongs to the acetylglutamate kinase family. ArgB subfamily.

It is found in the cytoplasm. The catalysed reaction is N-acetyl-L-glutamate + ATP = N-acetyl-L-glutamyl 5-phosphate + ADP. Its pathway is amino-acid biosynthesis; L-arginine biosynthesis; N(2)-acetyl-L-ornithine from L-glutamate: step 2/4. Its function is as follows. Catalyzes the ATP-dependent phosphorylation of N-acetyl-L-glutamate. The sequence is that of Acetylglutamate kinase from Bacillus cereus (strain AH820).